A 586-amino-acid chain; its full sequence is Non-structural glycoprotein GNS (586 aa).

Residues 1-14 form the signal peptide; sequence MFLQLFNIVLIYGV. The Extracellular segment spans residues 15-544; that stretch reads RTSQSTWINY…QNKEYWNEES (530 aa). N-linked (GlcNAc...) asparagine; by host glycosylation is found at Asn27, Asn68, Asn274, Asn350, Asn383, Asn476, Asn501, and Asn521. A helical transmembrane segment spans residues 545-562; the sequence is SIWGISTIITVLGIYYIY. Topologically, residues 563–586 are cytoplasmic; the sequence is RKNRREKIFLNMKHRVQRFFKLDY.

It belongs to the ephemerovirus glycoprotein family.

It localises to the host membrane. In Bos taurus (Bovine), this protein is Non-structural glycoprotein GNS (GNS).